The following is an 833-amino-acid chain: Ventricular zone-expressed PH domain-containing protein homolog 1 (833 aa).

The interval 201–319 (TELLALMSQL…TYLVSQLANM (119 aa)) is interaction with TGFBR1. The interval 458 to 505 (KGVGSDDGEDENRGDIPASISLSEIDPLGQGNDKLPFKTDTERSQLGE) is disordered. Positions 492–502 (LPFKTDTERSQ) are enriched in basic and acidic residues. The interaction with TGFBR1 stretch occupies residues 663–833 (ESTFPQQKDL…RESREVTTYL (171 aa)). Residues 716–819 (QPLIEGKLKE…WLQCINVAVA (104 aa)) enclose the PH domain.

It belongs to the MELT/VEPH family. In terms of assembly, interacts with TGFBR1.

It localises to the cell membrane. Functionally, interacts with TGF-beta receptor type-1 (TGFBR1) and inhibits dissociation of activated SMAD2 from TGFBR1, impeding its nuclear accumulation and resulting in impaired TGF-beta signaling. May also affect FOXO, Hippo and Wnt signaling. This is Ventricular zone-expressed PH domain-containing protein homolog 1 (VEPH1) from Homo sapiens (Human).